The sequence spans 545 residues: Membrane protein insertase YidC (545 aa).

4 helical membrane-spanning segments follow: residues 350–370, 424–444, 461–481, and 498–518; these read IIGN…AVLY, LPML…FASV, ADPY…QTYL, and PLVF…YWVV.

Belongs to the OXA1/ALB3/YidC family. Type 1 subfamily. In terms of assembly, interacts with the Sec translocase complex via SecD. Specifically interacts with transmembrane segments of nascent integral membrane proteins during membrane integration.

The protein resides in the cell inner membrane. Its function is as follows. Required for the insertion and/or proper folding and/or complex formation of integral membrane proteins into the membrane. Involved in integration of membrane proteins that insert both dependently and independently of the Sec translocase complex, as well as at least some lipoproteins. Aids folding of multispanning membrane proteins. The sequence is that of Membrane protein insertase YidC from Neisseria gonorrhoeae (strain ATCC 700825 / FA 1090).